The following is a 277-amino-acid chain: Putative phosphoenolpyruvate synthase regulatory protein (277 aa).

G157 to T164 is an ADP binding site.

Belongs to the pyruvate, phosphate/water dikinase regulatory protein family. PSRP subfamily.

It carries out the reaction [pyruvate, water dikinase] + ADP = [pyruvate, water dikinase]-phosphate + AMP + H(+). It catalyses the reaction [pyruvate, water dikinase]-phosphate + phosphate + H(+) = [pyruvate, water dikinase] + diphosphate. In terms of biological role, bifunctional serine/threonine kinase and phosphorylase involved in the regulation of the phosphoenolpyruvate synthase (PEPS) by catalyzing its phosphorylation/dephosphorylation. This Vibrio vulnificus (strain CMCP6) protein is Putative phosphoenolpyruvate synthase regulatory protein.